A 248-amino-acid chain; its full sequence is Putative amino-acid ABC transporter-binding protein PatH (248 aa).

Positions 1 to 21 are cleaved as a signal peptide; the sequence is MKNWIKVAVAAIALSAATVQA.

Belongs to the bacterial solute-binding protein 3 family.

It localises to the periplasm. Functionally, probably part of a binding-protein-dependent transport system for an amino acid. This is Putative amino-acid ABC transporter-binding protein PatH (patH) from Vibrio harveyi (Beneckea harveyi).